The chain runs to 61 residues: Beta-insect depressant toxin BaIT2 (61 aa).

Residues 1-61 (DGYIRRRDGC…TWKSETNTCG (61 aa)) enclose the LCN-type CS-alpha/beta domain. Intrachain disulfides connect Cys-10–Cys-60, Cys-14–Cys-35, Cys-21–Cys-42, and Cys-25–Cys-44.

It belongs to the long (4 C-C) scorpion toxin superfamily. Sodium channel inhibitor family. Beta subfamily. Expressed by the venom gland.

Its subcellular location is the secreted. Depressant insect beta-toxins cause a transient contraction paralysis followed by a slow flaccid paralysis. They bind voltage-independently at site-4 of sodium channels (Nav) and shift the voltage of activation toward more negative potentials thereby affecting sodium channel activation and promoting spontaneous and repetitive firing. This toxin is active only on insects. In Buthacus arenicola (North African scorpion), this protein is Beta-insect depressant toxin BaIT2.